The sequence spans 77 residues: Acyl carrier protein (77 aa).

The 76-residue stretch at Met1–Lys76 folds into the Carrier domain. The residue at position 36 (Ser36) is an O-(pantetheine 4'-phosphoryl)serine.

The protein belongs to the acyl carrier protein (ACP) family. In terms of processing, 4'-phosphopantetheine is transferred from CoA to a specific serine of apo-ACP by AcpS. This modification is essential for activity because fatty acids are bound in thioester linkage to the sulfhydryl of the prosthetic group.

The protein resides in the cytoplasm. The protein operates within lipid metabolism; fatty acid biosynthesis. Carrier of the growing fatty acid chain in fatty acid biosynthesis. In Leptospira biflexa serovar Patoc (strain Patoc 1 / Ames), this protein is Acyl carrier protein.